Reading from the N-terminus, the 457-residue chain is Bifunctional protein GlmU (457 aa).

The interval M1–R232 is pyrophosphorylase. UDP-N-acetyl-alpha-D-glucosamine-binding positions include L9–G12, K23, Q75, and G80–T81. D105 provides a ligand contact to Mg(2+). The UDP-N-acetyl-alpha-D-glucosamine site is built by G142, E157, N172, and N230. N230 serves as a coordination point for Mg(2+). Positions A233–D253 are linker. The N-acetyltransferase stretch occupies residues G254–K457. Residues R336 and K354 each coordinate UDP-N-acetyl-alpha-D-glucosamine. Residue H366 is the Proton acceptor of the active site. 2 residues coordinate UDP-N-acetyl-alpha-D-glucosamine: Y369 and N380. Residues N389–Y390, S408, A426, and R443 contribute to the acetyl-CoA site.

This sequence in the N-terminal section; belongs to the N-acetylglucosamine-1-phosphate uridyltransferase family. The protein in the C-terminal section; belongs to the transferase hexapeptide repeat family. Homotrimer. It depends on Mg(2+) as a cofactor.

The protein resides in the cytoplasm. It carries out the reaction alpha-D-glucosamine 1-phosphate + acetyl-CoA = N-acetyl-alpha-D-glucosamine 1-phosphate + CoA + H(+). The catalysed reaction is N-acetyl-alpha-D-glucosamine 1-phosphate + UTP + H(+) = UDP-N-acetyl-alpha-D-glucosamine + diphosphate. It participates in nucleotide-sugar biosynthesis; UDP-N-acetyl-alpha-D-glucosamine biosynthesis; N-acetyl-alpha-D-glucosamine 1-phosphate from alpha-D-glucosamine 6-phosphate (route II): step 2/2. Its pathway is nucleotide-sugar biosynthesis; UDP-N-acetyl-alpha-D-glucosamine biosynthesis; UDP-N-acetyl-alpha-D-glucosamine from N-acetyl-alpha-D-glucosamine 1-phosphate: step 1/1. It functions in the pathway bacterial outer membrane biogenesis; LPS lipid A biosynthesis. In terms of biological role, catalyzes the last two sequential reactions in the de novo biosynthetic pathway for UDP-N-acetylglucosamine (UDP-GlcNAc). The C-terminal domain catalyzes the transfer of acetyl group from acetyl coenzyme A to glucosamine-1-phosphate (GlcN-1-P) to produce N-acetylglucosamine-1-phosphate (GlcNAc-1-P), which is converted into UDP-GlcNAc by the transfer of uridine 5-monophosphate (from uridine 5-triphosphate), a reaction catalyzed by the N-terminal domain. This Geotalea uraniireducens (strain Rf4) (Geobacter uraniireducens) protein is Bifunctional protein GlmU.